The primary structure comprises 890 residues: DNA mismatch repair protein MutS (890 aa).

646–653 (GPNMAGKS) is a binding site for ATP.

This sequence belongs to the DNA mismatch repair MutS family.

In terms of biological role, this protein is involved in the repair of mismatches in DNA. It is possible that it carries out the mismatch recognition step. This protein has a weak ATPase activity. The polypeptide is DNA mismatch repair protein MutS (Hyphomonas neptunium (strain ATCC 15444)).